Consider the following 664-residue polypeptide: Cyclic nucleotide-gated channel alpha-2 (664 aa).

Over residues 1 to 20 (MTEKSNGVKSSPANNHNNHV) the composition is skewed to polar residues. The interval 1–49 (MTEKSNGVKSSPANNHNNHVPATIKANGKDESRTRSRPQSAADDDTSSE) is disordered. Residues 1–144 (MTEKSNGVKS…PAGDWYYRWL (144 aa)) are Cytoplasmic-facing. A helical membrane pass occupies residues 145–166 (FVIAMPVLYNWCLLVARACFSD). Residues 167 to 176 (LQRGYFLVWL) lie on the Extracellular side of the membrane. A helical membrane pass occupies residues 177 to 197 (VLDYFSDVVYIADLFIRLRTG). Over 198–222 (FLEQGLLVKDPKKLRDNYIHTLQFK) the chain is Cytoplasmic. The helical transmembrane segment at 223-241 (LDVASIIPTDLIYFAVGIH) threads the bilayer. Over 242 to 246 (NPELR) the chain is Extracellular. A helical membrane pass occupies residues 247 to 265 (FNRLLHFARMFEFFDRTET). Residues 266–272 (RTSYPNI) are Cytoplasmic-facing. The segment at 270-378 (PNIFRISNLV…GNVGSMISNM (109 aa)) is ion conduction pathway. The chain crosses the membrane as a helical span at residues 273–296 (FRISNLVLYILVIIHWNACIYYAI). Residues 297–319 (SKSIGFGVDTWVYPNITDPEYGY) lie on the Extracellular side of the membrane. 2 helical membrane-spanning segments follow: residues 320–354 (LARE…LFVI) and 355–379 (FDFL…SNMN). Residues 337–340 (TIGE) are selectivity filter. Positions 380 to 456 (ATRAEFQAKI…STLKKVRIFQ (77 aa)) are C-linker. Residues 380–664 (ATRAEFQAKI…SPEPAAAEQP (285 aa)) lie on the Cytoplasmic side of the membrane. The tract at residues 460–580 (AGLLVELVLK…EERGREILMK (121 aa)) is cyclic nucleotide-binding domain. 3',5'-cyclic GMP is bound by residues Gly-520, Ser-523, Arg-536, and Thr-537. 3',5'-cyclic AMP-binding residues include Arg-536 and Thr-537. A coiled-coil region spans residues 597 to 651 (VQEKLKQLETNMETLYTRFGRLLAEYTGAQQKLKQRITVLEVKMKQNTEDDYLSD). The disordered stretch occupies residues 644-664 (TEDDYLSDGMNSPEPAAAEQP).

It belongs to the cyclic nucleotide-gated cation channel (TC 1.A.1.5) family. CNGA2 subfamily. As to quaternary structure, the olfactory cyclic nucleotide-gated channel is an heterotetramer composed of CNGA2, CNGA4 and CNGB1b subunits with 2:1:1 stoichiometry.

It localises to the cell projection. The protein resides in the cilium membrane. It carries out the reaction Ca(2+)(in) = Ca(2+)(out). The catalysed reaction is Na(+)(in) = Na(+)(out). The enzyme catalyses K(+)(in) = K(+)(out). It catalyses the reaction NH4(+)(in) = NH4(+)(out). It carries out the reaction Rb(+)(in) = Rb(+)(out). The catalysed reaction is Li(+)(in) = Li(+)(out). The enzyme catalyses Cs(+)(in) = Cs(+)(out). Pore-forming subunit of the olfactory cyclic nucleotide-gated channel. Operates in the cilia of olfactory sensory neurons where chemical stimulation of the odorant is converted to an electrical signal. Mediates odorant-induced cAMP-dependent Ca(2+) influx triggering neuron depolarization. The rise of intracellular Ca(2+) levels potentiates the olfactory response by activating Ca(2+)-dependent Cl(-) channels, but it also serves as a negative feedback signal to desensitize the channel for rapid adaptation to odorants. Conducts cAMP- and cGMP-gated ion currents, with permeability for monovalent and divalent cations. The sequence is that of Cyclic nucleotide-gated channel alpha-2 from Oryctolagus cuniculus (Rabbit).